A 516-amino-acid chain; its full sequence is Cytochrome P450 1A2 (516 aa).

Residue serine 69 is glycosylated (O-linked (GlcNAc) serine). Phenylalanine 226 provides a ligand contact to substrate. Cysteine 458 contributes to the heme binding site.

Belongs to the cytochrome P450 family. Interacts with PGRMC1; the interaction requires PGRMC1 homodimerization. Requires heme as cofactor.

It localises to the endoplasmic reticulum membrane. The protein localises to the microsome membrane. It carries out the reaction an organic molecule + reduced [NADPH--hemoprotein reductase] + O2 = an alcohol + oxidized [NADPH--hemoprotein reductase] + H2O + H(+). It catalyses the reaction 17beta-estradiol + reduced [NADPH--hemoprotein reductase] + O2 = 2-hydroxy-17beta-estradiol + oxidized [NADPH--hemoprotein reductase] + H2O + H(+). The enzyme catalyses 17beta-estradiol + reduced [NADPH--hemoprotein reductase] + O2 = 4-hydroxy-17beta-estradiol + oxidized [NADPH--hemoprotein reductase] + H2O + H(+). The catalysed reaction is estrone + reduced [NADPH--hemoprotein reductase] + O2 = 2-hydroxyestrone + oxidized [NADPH--hemoprotein reductase] + H2O + H(+). It carries out the reaction estrone + reduced [NADPH--hemoprotein reductase] + O2 = 4-hydroxyestrone + oxidized [NADPH--hemoprotein reductase] + H2O + H(+). It catalyses the reaction cholesterol + reduced [NADPH--hemoprotein reductase] + O2 = 25-hydroxycholesterol + oxidized [NADPH--hemoprotein reductase] + H2O + H(+). The enzyme catalyses all-trans-retinol + reduced [NADPH--hemoprotein reductase] + O2 = all-trans-retinal + oxidized [NADPH--hemoprotein reductase] + 2 H2O + H(+). The catalysed reaction is all-trans-retinal + reduced [NADPH--hemoprotein reductase] + O2 = all-trans-retinoate + oxidized [NADPH--hemoprotein reductase] + H2O + 2 H(+). It carries out the reaction (5Z,8Z,11Z,14Z)-eicosatetraenoate + reduced [NADPH--hemoprotein reductase] + O2 = (14R,15S)-epoxy-(5Z,8Z,11Z)-eicosatrienoate + oxidized [NADPH--hemoprotein reductase] + H2O + H(+). It catalyses the reaction (5Z,8Z,11Z,14Z)-eicosatetraenoate + reduced [NADPH--hemoprotein reductase] + O2 = (14S,15R)-epoxy-(5Z,8Z,11Z)-eicosatrienoate + oxidized [NADPH--hemoprotein reductase] + H2O + H(+). The enzyme catalyses (5Z,8Z,11Z,14Z,17Z)-eicosapentaenoate + reduced [NADPH--hemoprotein reductase] + O2 = (17R,18S)-epoxy-(5Z,8Z,11Z,14Z)-eicosatetraenoate + oxidized [NADPH--hemoprotein reductase] + H2O + H(+). The catalysed reaction is (4Z,7Z,10Z,13Z,16Z,19Z)-docosahexaenoate + reduced [NADPH--hemoprotein reductase] + O2 = (19R,20S)-epoxy-(4Z,7Z,10Z,13Z,16Z)-docosapentaenoate + oxidized [NADPH--hemoprotein reductase] + H2O + H(+). It carries out the reaction (5S)-hydroperoxy-(6E,8Z,11Z,14Z)-eicosatetraenoate = 5-oxo-(6E,8Z,11Z,14Z)-eicosatetraenoate + H2O. It catalyses the reaction (12S)-hydroperoxy-(5Z,8Z,10E,14Z)-eicosatetraenoate = 12-oxo-(5Z,8Z,10E,14Z)-eicosatetraenoate + H2O. The enzyme catalyses (15S)-hydroperoxy-(5Z,8Z,11Z,13E)-eicosatetraenoate = 15-oxo-(5Z,8Z,11Z,13E)-eicosatetraenoate + H2O. The catalysed reaction is (13S)-hydroperoxy-(9Z,11E)-octadecadienoate = 13-oxo-(9Z,11E)-octadecadienoate + H2O. It carries out the reaction (5Z,8Z,11Z,14Z)-eicosatetraenoate + reduced [NADPH--hemoprotein reductase] + O2 = 13-hydroxy-(5Z,8Z,11Z,14Z)-eicosatetraenoate + oxidized [NADPH--hemoprotein reductase] + H2O + H(+). It catalyses the reaction (5Z,8Z,11Z,14Z)-eicosatetraenoate + reduced [NADPH--hemoprotein reductase] + O2 = 19-hydroxy-(5Z,8Z,11Z,14Z)-eicosatetraenoate + oxidized [NADPH--hemoprotein reductase] + H2O + H(+). The enzyme catalyses (9Z,12Z)-octadecadienoate + reduced [NADPH--hemoprotein reductase] + O2 = 11-hydroxy-(9Z,12Z)-octadecadienoate + oxidized [NADPH--hemoprotein reductase] + H2O + H(+). It functions in the pathway cofactor metabolism; retinol metabolism. Its pathway is steroid metabolism; cholesterol metabolism. It participates in lipid metabolism; arachidonate metabolism. A cytochrome P450 monooxygenase involved in the metabolism of various endogenous substrates, including fatty acids, steroid hormones and vitamins. Mechanistically, uses molecular oxygen inserting one oxygen atom into a substrate, and reducing the second into a water molecule, with two electrons provided by NADPH via cytochrome P450 reductase (NADPH--hemoprotein reductase). Catalyzes the hydroxylation of carbon-hydrogen bonds. Exhibits high catalytic activity for the formation of hydroxyestrogens from estrone (E1) and 17beta-estradiol (E2), namely 2-hydroxy E1 and E2. Metabolizes cholesterol toward 25-hydroxycholesterol, a physiological regulator of cellular cholesterol homeostasis. May act as a major enzyme for all-trans retinoic acid biosynthesis in the liver. Catalyzes two successive oxidative transformation of all-trans retinol to all-trans retinal and then to the active form all-trans retinoic acid. Primarily catalyzes stereoselective epoxidation of the last double bond of polyunsaturated fatty acids (PUFA), displaying a strong preference for the (R,S) stereoisomer. Catalyzes bisallylic hydroxylation and omega-1 hydroxylation of PUFA. May also participate in eicosanoids metabolism by converting hydroperoxide species into oxo metabolites (lipoxygenase-like reaction, NADPH-independent). Plays a role in the oxidative metabolism of xenobiotics. Catalyzes the N-hydroxylation of heterocyclic amines and the O-deethylation of phenacetin. Metabolizes caffeine via N3-demethylation. The sequence is that of Cytochrome P450 1A2 (CYP1A2) from Macaca fuscata fuscata (Japanese macaque).